A 1528-amino-acid polypeptide reads, in one-letter code: 5'-3' exoribonuclease 1 (1528 aa).

3 disordered regions span residues 1246–1331 (SKKA…KSSE), 1431–1455 (PPPA…NVSD), and 1470–1528 (LKKF…DEST). Over residues 1274–1304 (QSEEKLRKERAHDLLNFIKKDTNEKNSESVD) the composition is skewed to basic and acidic residues. Residues 1317–1326 (AKKVLLKRPA) show a composition bias toward basic residues. Over residues 1500-1517 (SSGTNSTECQSPKSQSNA) the composition is skewed to polar residues. Residue T1506 is modified to Phosphothreonine. S1510 carries the phosphoserine modification. A compositionally biased stretch (basic and acidic residues) spans 1518-1528 (ADRDNKKDEST).

Belongs to the 5'-3' exonuclease family. It depends on Mg(2+) as a cofactor.

It localises to the cytoplasm. It is found in the perinuclear region. The protein resides in the P-body. Its activity is regulated as follows. 3'-phosphoadenosine 5'-phosphate (pAp) is an inhibitor of KEM1. Sodium-induced GCN4 expression reduces pAp accumulation by activating HAL2 expression, and therefore maintains mRNA degradation capacity which is likely to be important for the accurate and rapid adaptation of gene expression to salt stress. In terms of biological role, multifunctional protein that exhibits several independent functions at different levels of the cellular processes. 5'-3' exonuclease component of the nonsense-mediated mRNA decay (NMD) which is a highly conserved mRNA degradation pathway, an RNA surveillance system whose role is to identify and rid cells of mRNA with premature termination codons and thus prevents accumulation of potentially harmful truncated proteins. The NMD pathway has a second role regulating the decay of wild-type mRNAs, and especially mRNAs that are important for telomere functions. Participate in CTH2-mediated and VTS1-mediated mRNA turnover. Involved in the degradation of several hypomodified mature tRNA species and participates in the 5'-processing or the degradation of the snoRNA precursors and rRNA processing. Involved in defense against virus and suppresses viral RNA recombination by rapidly removing the 5'-truncated RNAs, the substrates of recombination, and thus reducing the chance for recombination to occur in the parental strain. Required for the assembly of the virus-like particles of the Ty3 retrotransposon and contributes to the efficient generation of narnavirus 20S RNA by playing a major role in the elimination of the non-viral upstream sequences from the primary transcripts. Degrades single-stranded DNA (ss-DNA) and can renature complementary ss-DNA as well as catalyzes the formation of heteroduplex DNA from circular ss-DNA and homologous linear ds-DNA in vitro. Acts as a microtubule-associated protein which interacts with cytoplasmic microtubules through beta-tubulin and promotes in vitro assembly of tubulin into microtubules. Associates with microtubule functions such as chromosome transmission, nuclear migration, and SPB duplication. Has also a role in G1 to S transition and is involved in nuclear fusion during karyogamy. Required for the expression of ROK1 at the post-transcriptional level and for the alpha-factor induction of the karyogamy genes KAR3 and KAR4. Plays a role in filamentous growth. The chain is 5'-3' exoribonuclease 1 (XRN1) from Saccharomyces cerevisiae (strain ATCC 204508 / S288c) (Baker's yeast).